The chain runs to 161 residues: Fatty acid-binding protein homolog 2 (161 aa).

The N-terminal stretch at 1–19 (MSSKFLILLAFCGATLVAA) is a signal peptide.

Belongs to the calycin superfamily. Fatty-acid binding protein (FABP) family.

The protein resides in the secreted. In terms of biological role, may play a role in sequestering potentially toxic fatty acids and their peroxidation products, or it may be involved in the maintenance of the impermeable lipid layer of the eggshell. The polypeptide is Fatty acid-binding protein homolog 2 (lbp-2) (Caenorhabditis elegans).